The primary structure comprises 1052 residues: MSDAVGGVYPRVDMSGGTNVFPDMERQVLEYWKDDETFKASLTNREENPEYVFYDGPPFANGLPHYGHLLTGYVKDIVPRYQTMKGKLVNRVFGWDCHGLPAELEAEKQLGIKDKGEIEAMGLESFNNYCAKSVLEYTQEWKDYVTRQARWVDFDNGYKTMDMDFMESVMWAFKTLYDKGLIYQGFRVLPYSWAEHTPLSNQETRLDDSYKMRQDPTLTVTFPITGVKDDSAADASLVGAYALAWTTTPWTLPSNLALAVNPQVNYVEVKVGDQGAEAIRGQRVLLAEALVGAYAKELGEDHEVLTVRPGSELVGLTYQPIFSYFADHENAFQILAAEYVTTEDGTGIVHQAPAFGEDDMNTCKEYGIEVVIPVDMDGKFTSLVPEYQGQLVFDANKSIIADLKAAGRVVRHQTIEHSYPHSWRSGEPLIYMALPSWFVEVTKIRDRMVELNKEIDWMPSHIRDGQFGKWLEGARDWNISRNRYWGSPIPVWVSDDENYPRVDVYGSLEELERDFGVRPESLHRPHIDELTRPNPDDPTGKSTMRRVPEVLDCWFESGSMPFAQKHYPFENKDWFDTHSPADFIVEYSGQTRGWFYTLHVLATALFDRPAFKKVVAHGIVLGDDGTKMSKSRRNYPDVNEVFNRDGSDAMRWFLMSSPILRGGNLIVTEQGIREGVRQALLPMWNAYSFLQLYSSKPAQWSVDSSDVLDRYILAKLHDVVAAVGDALDNTDIARACDEVRTFCDALTNWYVRRSRDRFWAGDTEHPEAFYTLYTVLETLTRVTAPLLPMVSEVIWRGLTGERSVHLADFPQADQFPADDDLVRAMDEVRGVCSATSSVRKAHKLRNRLPLPKVTVALPESARLADFADIIRDEVNVKEVALTSDVDSVGRFDVVVNAKVAGPRLCKDVQRAIKAVKSGNYERRGDTVVADGIELVAGEFTERLVAADPDSTTQIDGVDGLVVLDMTLTEELEAEGWAADVIRGLQDARKASGFEVSDRIEVKLVVPEEKKEWALRHTDMIAGEVLATSFEVVTGEPAEHDIVAGVTATVQKV.

A 'HIGH' region motif is present at residues 58-68 (PFANGLPHYGH). The short motif at 627–631 (KMSKS) is the 'KMSKS' region element. Lys630 lines the ATP pocket.

It belongs to the class-I aminoacyl-tRNA synthetase family. IleS type 2 subfamily. As to quaternary structure, monomer. Zn(2+) is required as a cofactor.

It is found in the cytoplasm. The catalysed reaction is tRNA(Ile) + L-isoleucine + ATP = L-isoleucyl-tRNA(Ile) + AMP + diphosphate. Functionally, catalyzes the attachment of isoleucine to tRNA(Ile). As IleRS can inadvertently accommodate and process structurally similar amino acids such as valine, to avoid such errors it has two additional distinct tRNA(Ile)-dependent editing activities. One activity is designated as 'pretransfer' editing and involves the hydrolysis of activated Val-AMP. The other activity is designated 'posttransfer' editing and involves deacylation of mischarged Val-tRNA(Ile). The chain is Isoleucine--tRNA ligase from Corynebacterium diphtheriae (strain ATCC 700971 / NCTC 13129 / Biotype gravis).